A 465-amino-acid chain; its full sequence is Probable Xaa-Pro aminopeptidase pepP (465 aa).

4 residues coordinate Mn(2+): Asp263, Asp274, Glu397, and Glu437.

Belongs to the peptidase M24B family. Requires Mn(2+) as cofactor.

It catalyses the reaction Release of any N-terminal amino acid, including proline, that is linked to proline, even from a dipeptide or tripeptide.. In terms of biological role, catalyzes the removal of a penultimate prolyl residue from the N-termini of peptides. The sequence is that of Probable Xaa-Pro aminopeptidase pepP (pepP) from Emericella nidulans (strain FGSC A4 / ATCC 38163 / CBS 112.46 / NRRL 194 / M139) (Aspergillus nidulans).